Consider the following 292-residue polypeptide: 33 kDa chaperonin (292 aa).

Disulfide bonds link cysteine 230–cysteine 232 and cysteine 263–cysteine 266.

This sequence belongs to the HSP33 family. In terms of processing, under oxidizing conditions two disulfide bonds are formed involving the reactive cysteines. Under reducing conditions zinc is bound to the reactive cysteines and the protein is inactive.

Its subcellular location is the cytoplasm. In terms of biological role, redox regulated molecular chaperone. Protects both thermally unfolding and oxidatively damaged proteins from irreversible aggregation. Plays an important role in the bacterial defense system toward oxidative stress. This Enterobacter sp. (strain 638) protein is 33 kDa chaperonin.